Reading from the N-terminus, the 339-residue chain is DNA-directed RNA polymerase subunit alpha (339 aa).

Positions 1 to 233 (MVREEITGST…DLFLPFLHTE (233 aa)) are alpha N-terminal domain (alpha-NTD). The segment at 264 to 339 (KKGIPLNCIF…IDLPKNKFSL (76 aa)) is alpha C-terminal domain (alpha-CTD).

The protein belongs to the RNA polymerase alpha chain family. As to quaternary structure, in plastids the minimal PEP RNA polymerase catalytic core is composed of four subunits: alpha, beta, beta', and beta''. When a (nuclear-encoded) sigma factor is associated with the core the holoenzyme is formed, which can initiate transcription.

It localises to the plastid. The protein localises to the chloroplast. The catalysed reaction is RNA(n) + a ribonucleoside 5'-triphosphate = RNA(n+1) + diphosphate. In terms of biological role, DNA-dependent RNA polymerase catalyzes the transcription of DNA into RNA using the four ribonucleoside triphosphates as substrates. The chain is DNA-directed RNA polymerase subunit alpha from Zea mays (Maize).